The chain runs to 97 residues: CLAVATA3/ESR (CLE)-related protein ESR2-C (97 aa).

Residues 1-97 (TRTDDKPGVN…IGPPPFLDRY (97 aa)) form a disordered region. 2 positions are modified to hydroxyproline: Pro47 and Pro50. Pro50 carries O-linked (Ara...) hydroxyproline glycosylation.

The protein belongs to the CLV3/ESR signal peptide family. In terms of processing, the O-glycosylation (arabinosylation) of the hydroxyproline Pro-50 enhances binding affinity of the ESR2Cp peptide for its receptor. Seed endosperm.

The protein resides in the secreted. It localises to the extracellular space. Extracellular signal peptide that regulates cell fate. The chain is CLAVATA3/ESR (CLE)-related protein ESR2-C from Zea mays (Maize).